We begin with the raw amino-acid sequence, 157 residues long: S-ribosylhomocysteine lyase (157 aa).

Positions 54, 58, and 124 each coordinate Fe cation.

The protein belongs to the LuxS family. Homodimer. Requires Fe cation as cofactor.

It catalyses the reaction S-(5-deoxy-D-ribos-5-yl)-L-homocysteine = (S)-4,5-dihydroxypentane-2,3-dione + L-homocysteine. Involved in the synthesis of autoinducer 2 (AI-2) which is secreted by bacteria and is used to communicate both the cell density and the metabolic potential of the environment. The regulation of gene expression in response to changes in cell density is called quorum sensing. Catalyzes the transformation of S-ribosylhomocysteine (RHC) to homocysteine (HC) and 4,5-dihydroxy-2,3-pentadione (DPD). This is S-ribosylhomocysteine lyase from Lactobacillus helveticus (strain DPC 4571).